A 290-amino-acid polypeptide reads, in one-letter code: 2-dehydro-3-deoxyphosphooctonate aldolase 1 (290 aa).

Ala-2 bears the N-acetylalanine mark.

The protein belongs to the KdsA family. In terms of tissue distribution, expressed in shoots.

The protein localises to the cytoplasm. It catalyses the reaction D-arabinose 5-phosphate + phosphoenolpyruvate + H2O = 3-deoxy-alpha-D-manno-2-octulosonate-8-phosphate + phosphate. Catalyzes the stereospecific condensation of D-arabinose 5-phosphate and phosphoenolpyruvate to form 3-deoxy-D-manno-octulosonate 8-phosphate (KDO-8-phosphate) and inorganic phosphate. Involved in the biosynthesis of 3-deoxy-D-manno-octulosonate (KDO) which is an indispensable component of rhamnogalacturonan II (RG-II), a structurally complex pectic polysaccharide of the primary cell wall. RG-II is essential for the cell wall integrity of rapidly growing tissues and pollen tube growth and elongation. This chain is 2-dehydro-3-deoxyphosphooctonate aldolase 1 (KDSA1), found in Arabidopsis thaliana (Mouse-ear cress).